Consider the following 163-residue polypeptide: Probable chemoreceptor glutamine deamidase CheD (163 aa).

It belongs to the CheD family.

It carries out the reaction L-glutaminyl-[protein] + H2O = L-glutamyl-[protein] + NH4(+). In terms of biological role, probably deamidates glutamine residues to glutamate on methyl-accepting chemotaxis receptors (MCPs), playing an important role in chemotaxis. This chain is Probable chemoreceptor glutamine deamidase CheD, found in Borrelia garinii subsp. bavariensis (strain ATCC BAA-2496 / DSM 23469 / PBi) (Borreliella bavariensis).